The sequence spans 543 residues: MTKSNGEDPRAGSRMERFQQGVRQRTLLAKKKVQNITKDDVKGFLKRNGFVLFTVIAVVVGSILGFSVRSYHMTFRELKYFSFPGELLMRMLQMLVLPLIVSSLVTGMAALDSKASGKMGLRAVVYYMTTTVIAVFIGIVIVIIVHPGKGTKEHMHREGKIEPVTAADAFLDLIRNMFPPNMVEACFKQFKTSYEKKIFKVTMPANETAVMTSVLNNVSEAMETLTKMREEMIPVPGAVNGVNALGLVVFSMCFGLVIGNMKEQGKALKDFFDSLNEAIMRLVAVIMWYAPIGILFLIAGKIAEMEDMGVVGGQLGMYTVTVIIGLLIHAVIVLPLLYFAVTRKNPWVFIGGILQALITALGTSSSSATLPITFKCLEENNKVDKRVTRFVLPVGATINMDGTALYEALAAIFIAQVNNYDLNFGQILTISITATAASIGAAGIPQAGLVTMVIVLTSVGLPTDDITLIIAVDWFLDRLRTTTNVLGDSLGAGIVEHLSRHELQSGDAEMGNSVIEENEMKKPYQLVSQENELEKPIDSETKM.

Residues 1-47 (MTKSNGEDPRAGSRMERFQQGVRQRTLLAKKKVQNITKDDVKGFLKR) lie on the Cytoplasmic side of the membrane. The helical transmembrane segment at 48 to 68 (NGFVLFTVIAVVVGSILGFSV) threads the bilayer. Residues 69–86 (RSYHMTFRELKYFSFPGE) are Extracellular-facing. A helical transmembrane segment spans residues 87 to 108 (LLMRMLQMLVLPLIVSSLVTGM). At 109-122 (AALDSKASGKMGLR) the chain is on the cytoplasmic side. The chain crosses the membrane as a helical span at residues 123–145 (AVVYYMTTTVIAVFIGIVIVIIV). Residues 146-237 (HPGKGTKEHM…MREEMIPVPG (92 aa)) are Extracellular-facing. Asn-206 and Asn-217 each carry an N-linked (GlcNAc...) asparagine glycan. Residues 238–261 (AVNGVNALGLVVFSMCFGLVIGNM) traverse the membrane as a helical segment. Over 262–270 (KEQGKALKD) the chain is Cytoplasmic. A helical membrane pass occupies residues 271–298 (FFDSLNEAIMRLVAVIMWYAPIGILFLI). At 299-319 (AGKIAEMEDMGVVGGQLGMYT) the chain is on the extracellular side. A helical transmembrane segment spans residues 320-341 (VTVIIGLLIHAVIVLPLLYFAV). Residues 342–346 (TRKNP) lie on the Cytoplasmic side of the membrane. The discontinuously helical intramembrane region spans 347-377 (WVFIGGILQALITALGTSSSSATLPITFKCL). 364–366 (SSS) contributes to the L-aspartate binding site. At 378 to 386 (EENNKVDKR) the chain is on the cytoplasmic side. The chain crosses the membrane as a helical span at residues 387 to 413 (VTRFVLPVGATINMDGTALYEALAAIF). Na(+)-binding residues include Gly-395, Thr-397, and Asn-399. An L-aspartate-binding site is contributed by Thr-403. Residues 414–426 (IAQVNNYDLNFGQ) lie on the Extracellular side of the membrane. Residues 427 to 460 (ILTISITATAASIGAAGIPQAGLVTMVIVLTSVG) constitute an intramembrane region (discontinuously helical). 444-448 (IPQAG) lines the L-aspartate pocket. Residues 461 to 473 (LPTDDITLIIAVD) lie on the Extracellular side of the membrane. The helical transmembrane segment at 474-495 (WFLDRLRTTTNVLGDSLGAGIV) threads the bilayer. L-aspartate-binding residues include Asp-477 and Asn-484. The Na(+) site is built by Asn-484 and Asp-488. Over 496–543 (EHLSRHELQSGDAEMGNSVIEENEMKKPYQLVSQENELEKPIDSETKM) the chain is Cytoplasmic. The disordered stretch occupies residues 521-543 (KKPYQLVSQENELEKPIDSETKM). Over residues 532–543 (ELEKPIDSETKM) the composition is skewed to basic and acidic residues.

It belongs to the dicarboxylate/amino acid:cation symporter (DAACS) (TC 2.A.23) family. In terms of assembly, homotrimer. As to expression, detected in retina (at protein level).

Its subcellular location is the cell membrane. It catalyses the reaction K(+)(in) + L-glutamate(out) + 3 Na(+)(out) + H(+)(out) = K(+)(out) + L-glutamate(in) + 3 Na(+)(in) + H(+)(in). The enzyme catalyses K(+)(in) + L-aspartate(out) + 3 Na(+)(out) + H(+)(out) = K(+)(out) + L-aspartate(in) + 3 Na(+)(in) + H(+)(in). It carries out the reaction D-aspartate(out) + K(+)(in) + 3 Na(+)(out) + H(+)(out) = D-aspartate(in) + K(+)(out) + 3 Na(+)(in) + H(+)(in). Its function is as follows. Sodium-dependent, high-affinity amino acid transporter that mediates the uptake of L-glutamate and also L-aspartate and D-aspartate. Functions as a symporter that transports one amino acid molecule together with two or three Na(+) ions and one proton, in parallel with the counter-transport of one K(+) ion. Plays a redundant role in the rapid removal of released glutamate from the synaptic cleft, which is essential for terminating the postsynaptic action of glutamate. This Ambystoma tigrinum (Eastern tiger salamander) protein is Excitatory amino acid transporter 1 (SLC1A3).